Here is a 272-residue protein sequence, read N- to C-terminus: 2-C-methyl-D-erythritol 4-phosphate cytidylyltransferase (272 aa).

The protein belongs to the IspD/TarI cytidylyltransferase family. IspD subfamily.

The enzyme catalyses 2-C-methyl-D-erythritol 4-phosphate + CTP + H(+) = 4-CDP-2-C-methyl-D-erythritol + diphosphate. It functions in the pathway isoprenoid biosynthesis; isopentenyl diphosphate biosynthesis via DXP pathway; isopentenyl diphosphate from 1-deoxy-D-xylulose 5-phosphate: step 2/6. Functionally, catalyzes the formation of 4-diphosphocytidyl-2-C-methyl-D-erythritol from CTP and 2-C-methyl-D-erythritol 4-phosphate (MEP). The sequence is that of 2-C-methyl-D-erythritol 4-phosphate cytidylyltransferase from Xanthomonas oryzae pv. oryzae (strain PXO99A).